The primary structure comprises 96 residues: Small ribosomal subunit protein uS15 (96 aa).

Belongs to the universal ribosomal protein uS15 family. Part of the 30S ribosomal subunit. Forms a bridge to the 50S subunit in the 70S ribosome, contacting the 23S rRNA.

Its function is as follows. One of the primary rRNA binding proteins, it binds directly to 16S rRNA where it helps nucleate assembly of the platform of the 30S subunit by binding and bridging several RNA helices of the 16S rRNA. Functionally, forms an intersubunit bridge (bridge B4) with the 23S rRNA of the 50S subunit in the ribosome. In Streptomyces griseus subsp. griseus (strain JCM 4626 / CBS 651.72 / NBRC 13350 / KCC S-0626 / ISP 5235), this protein is Small ribosomal subunit protein uS15.